The sequence spans 419 residues: DNA primase DnaG (419 aa).

The Toprim domain occupies 168–244 (DTIIVVEGRS…KVDYVARAPE (77 aa)). 3 residues coordinate Mg(2+): Glu174, Asp218, and Asp220. 2 stretches are compositionally biased toward basic and acidic residues: residues 280–291 (KPAEEAVKREEE) and 306–316 (KAAKPPEEKPP). The tract at residues 280–317 (KPAEEAVKREEEAAAEAKPPAPAVQEKAAKPPEEKPPT) is disordered.

The protein belongs to the archaeal DnaG primase family. Forms a ternary complex with MCM helicase and DNA. Component of the archaeal exosome complex. It depends on Mg(2+) as a cofactor.

It catalyses the reaction ssDNA + n NTP = ssDNA/pppN(pN)n-1 hybrid + (n-1) diphosphate.. RNA polymerase that catalyzes the synthesis of short RNA molecules used as primers for DNA polymerase during DNA replication. Also part of the exosome, which is a complex involved in RNA degradation. Acts as a poly(A)-binding protein that enhances the interaction between heteromeric, adenine-rich transcripts and the exosome. This is DNA primase DnaG from Aeropyrum pernix (strain ATCC 700893 / DSM 11879 / JCM 9820 / NBRC 100138 / K1).